The chain runs to 288 residues: MFEPVPDLNLEASVELGEVNIDQTTPMIKENIGFISRSRRLFAHRSKDDERKLALRFFLQRLYFLDHREIHYLFRCVDAVKDVTITKKNNIIVAPYIALLTIASKGCKLTETMIEAFFPELYNEHSKKFKFNSQVSIIQEKLGYQSGNYHVYDFEPYYSTVALAIRDEHSSGIFNIRQESYLVSSLSEITYRFYLINLKSDLVQWSASTGAVINQMVNTVLITVYEKLQLVIENDSQFICSLAVESELPIKLLKDRNELFTKFINELKKTSSFKISKRDKDTLLKYFT.

Belongs to the orthopoxvirus OPG134 family. As to quaternary structure, heterodimer of a 45 kDa (A23R) and a 32 kDa (A8R) subunit to form the virus intermediate transcription factor (VITF)-3.

Its function is as follows. Acts with RNA polymerase to initiate transcription from intermediate gene promoters. In Homo sapiens (Human), this protein is Intermediate transcription factor 3 small subunit (OPG134).